An 88-amino-acid chain; its full sequence is MAKEELIELQGVVDEVLPDSRYRVTLDNGVAVGAYASGRIRKHRIRILAGDRVTLEMSPYDLTKGRINFRHKDERPSSAPANRNFVRR.

Positions 1 to 72 (MAKEELIELQ…TKGRINFRHK (72 aa)) constitute an S1-like domain.

This sequence belongs to the IF-1 family. Component of the 30S ribosomal translation pre-initiation complex which assembles on the 30S ribosome in the order IF-2 and IF-3, IF-1 and N-formylmethionyl-tRNA(fMet); mRNA recruitment can occur at any time during PIC assembly.

The protein resides in the cytoplasm. Its function is as follows. One of the essential components for the initiation of protein synthesis. Stabilizes the binding of IF-2 and IF-3 on the 30S subunit to which N-formylmethionyl-tRNA(fMet) subsequently binds. Helps modulate mRNA selection, yielding the 30S pre-initiation complex (PIC). Upon addition of the 50S ribosomal subunit IF-1, IF-2 and IF-3 are released leaving the mature 70S translation initiation complex. The chain is Translation initiation factor IF-1 2 from Bordetella avium (strain 197N).